The chain runs to 133 residues: Large ribosomal subunit protein bL17 (133 aa).

The protein belongs to the bacterial ribosomal protein bL17 family. As to quaternary structure, part of the 50S ribosomal subunit. Contacts protein L32.

The protein is Large ribosomal subunit protein bL17 of Idiomarina loihiensis (strain ATCC BAA-735 / DSM 15497 / L2-TR).